The primary structure comprises 109 residues: Large ribosomal subunit protein P1 (109 aa).

The tract at residues 90-109 (AAAKKEEEEEDDDMGFGLFD) is disordered.

This sequence belongs to the eukaryotic ribosomal protein P1/P2 family. P1 and P2 exist as dimers at the large ribosomal subunit.

Plays an important role in the elongation step of protein synthesis. The protein is Large ribosomal subunit protein P1 of Trypanosoma cruzi.